Consider the following 116-residue polypeptide: Putative gamma-glutamylcyclotransferase PH0828 (116 aa).

13–16 contributes to the substrate binding site; sequence YGTL. Residue Glu76 is the Proton acceptor of the active site.

The protein belongs to the gamma-glutamylcyclotransferase family.

Its function is as follows. Putative gamma-glutamylcyclotransferase. The sequence is that of Putative gamma-glutamylcyclotransferase PH0828 from Pyrococcus horikoshii (strain ATCC 700860 / DSM 12428 / JCM 9974 / NBRC 100139 / OT-3).